The sequence spans 412 residues: Serine hydroxymethyltransferase (412 aa).

Residues leucine 117 and glycine 121–leucine 123 each bind (6S)-5,6,7,8-tetrahydrofolate. At lysine 226 the chain carries N6-(pyridoxal phosphate)lysine. A (6S)-5,6,7,8-tetrahydrofolate-binding site is contributed by glutamate 241.

It belongs to the SHMT family. As to quaternary structure, homodimer. Pyridoxal 5'-phosphate is required as a cofactor.

The protein localises to the cytoplasm. It carries out the reaction (6R)-5,10-methylene-5,6,7,8-tetrahydrofolate + glycine + H2O = (6S)-5,6,7,8-tetrahydrofolate + L-serine. The protein operates within one-carbon metabolism; tetrahydrofolate interconversion. It functions in the pathway amino-acid biosynthesis; glycine biosynthesis; glycine from L-serine: step 1/1. Functionally, catalyzes the reversible interconversion of serine and glycine with tetrahydrofolate (THF) serving as the one-carbon carrier. This reaction serves as the major source of one-carbon groups required for the biosynthesis of purines, thymidylate, methionine, and other important biomolecules. Also exhibits THF-independent aldolase activity toward beta-hydroxyamino acids, producing glycine and aldehydes, via a retro-aldol mechanism. The protein is Serine hydroxymethyltransferase of Staphylococcus carnosus (strain TM300).